The sequence spans 475 residues: Ribulose bisphosphate carboxylase large chain (475 aa).

Positions 1 to 2 (MS) are excised as a propeptide. An N-acetylproline modification is found at Pro3. Lys14 is subject to N6,N6,N6-trimethyllysine. Substrate-binding residues include Asn123 and Thr173. Lys175 (proton acceptor) is an active-site residue. Lys177 serves as a coordination point for substrate. Positions 201, 203, and 204 each coordinate Mg(2+). Residue Lys201 is modified to N6-carboxylysine. His294 (proton acceptor) is an active-site residue. Residues Arg295, His327, and Ser379 each coordinate substrate.

The protein belongs to the RuBisCO large chain family. Type I subfamily. As to quaternary structure, heterohexadecamer of 8 large chains and 8 small chains; disulfide-linked. The disulfide link is formed within the large subunit homodimers. Mg(2+) is required as a cofactor. The disulfide bond which can form in the large chain dimeric partners within the hexadecamer appears to be associated with oxidative stress and protein turnover.

It localises to the plastid. Its subcellular location is the chloroplast. The enzyme catalyses 2 (2R)-3-phosphoglycerate + 2 H(+) = D-ribulose 1,5-bisphosphate + CO2 + H2O. It catalyses the reaction D-ribulose 1,5-bisphosphate + O2 = 2-phosphoglycolate + (2R)-3-phosphoglycerate + 2 H(+). Its function is as follows. RuBisCO catalyzes two reactions: the carboxylation of D-ribulose 1,5-bisphosphate, the primary event in carbon dioxide fixation, as well as the oxidative fragmentation of the pentose substrate in the photorespiration process. Both reactions occur simultaneously and in competition at the same active site. The protein is Ribulose bisphosphate carboxylase large chain (rbcL) of Marchantia polymorpha (Common liverwort).